The following is a 447-amino-acid chain: UPF0328 protein ECU10_1870 (447 aa).

2 stretches are compositionally biased toward basic and acidic residues: residues 1 to 10 (MPSDHPDFRS) and 64 to 84 (HTEG…HTET). Disordered regions lie at residues 1–103 (MPSD…TATP) and 147–173 (VKSQ…NPRI). Positions 92 to 103 (CPPPHPGPTATP) are enriched in pro residues.

This sequence belongs to the UPF0328 family.

The polypeptide is UPF0328 protein ECU10_1870 (Encephalitozoon cuniculi (strain GB-M1) (Microsporidian parasite)).